The sequence spans 482 residues: UDP-N-acetylmuramate--L-alanine ligase (482 aa).

111 to 117 (GTHGKTT) is a binding site for ATP.

It belongs to the MurCDEF family.

It is found in the cytoplasm. It catalyses the reaction UDP-N-acetyl-alpha-D-muramate + L-alanine + ATP = UDP-N-acetyl-alpha-D-muramoyl-L-alanine + ADP + phosphate + H(+). It functions in the pathway cell wall biogenesis; peptidoglycan biosynthesis. In terms of biological role, cell wall formation. The protein is UDP-N-acetylmuramate--L-alanine ligase of Symbiobacterium thermophilum (strain DSM 24528 / JCM 14929 / IAM 14863 / T).